The primary structure comprises 197 residues: MAVDAKLVKTLREMTGAGMLECKSALEEANGDLELAVEILRKKGVAKAAKKAGRETKEGLIHAYIHAGGRIGVLLELNCETDFVARNELFKELANEIALQIAAMKPQYVKREDVPREVVEKEGEIAREAAVAEGKPAHIAEKIAEGKLEKFYKEVCLYEQPYIKDDKKTIEELVKEYIAKIGENIQVRRFCRYELGE.

The tract at residues threonine 81 to valine 84 is involved in Mg(2+) ion dislocation from EF-Tu.

It belongs to the EF-Ts family.

The protein resides in the cytoplasm. Associates with the EF-Tu.GDP complex and induces the exchange of GDP to GTP. It remains bound to the aminoacyl-tRNA.EF-Tu.GTP complex up to the GTP hydrolysis stage on the ribosome. In Sulfurihydrogenibium sp. (strain YO3AOP1), this protein is Elongation factor Ts.